We begin with the raw amino-acid sequence, 246 residues long: Phosphomannomutase 2 (246 aa).

N-acetylalanine is present on alanine 2. The active-site Nucleophile is aspartate 12. Positions 12 and 14 each coordinate Mg(2+). Aspartate 14 (proton donor/acceptor) is an active-site residue. Alpha-D-mannose 1-phosphate-binding residues include arginine 21, arginine 123, arginine 134, and arginine 141. Position 149 is an N6-acetyllysine (lysine 149). Residues serine 179 and aspartate 181 each contribute to the alpha-D-mannose 1-phosphate site. Mg(2+) is bound by residues aspartate 209, phenylalanine 221, aspartate 223, and threonine 226.

It belongs to the eukaryotic PMM family. In terms of assembly, homodimer.

The protein localises to the cytoplasm. It catalyses the reaction alpha-D-mannose 1-phosphate = D-mannose 6-phosphate. It functions in the pathway nucleotide-sugar biosynthesis; GDP-alpha-D-mannose biosynthesis; alpha-D-mannose 1-phosphate from D-fructose 6-phosphate: step 2/2. In terms of biological role, involved in the synthesis of the GDP-mannose and dolichol-phosphate-mannose required for a number of critical mannosyl transfer reactions. The sequence is that of Phosphomannomutase 2 (PMM2) from Macaca fascicularis (Crab-eating macaque).